The sequence spans 168 residues: DNA damage-inducible transcript 3 protein (168 aa).

The tract at residues 10-18 (FGALSSWEL) is interaction with TRIB3. The N-terminal stretch occupies residues 10–26 (FGALSSWELEAWYEDLQ). A phosphoserine; by CK2 mark is found at Ser-14, Ser-15, Ser-30, and Ser-31. The segment at 31–141 (SDENRGTCVS…QLAEENERLK (111 aa)) is disordered. The segment covering 76 to 90 (SQSPCSPESSQSSLA) has biased composition (low complexity). Ser-78 and Ser-81 each carry phosphoserine; by MAPK14. A bZIP domain is found at 98–161 (QGRTRKRKQS…EATRRALIDR (64 aa)). The tract at residues 100–129 (RTRKRKQSGQSPARAGKQRMKEKEQENERK) is basic motif. Over residues 118–141 (RMKEKEQENERKVAQLAEENERLK) the composition is skewed to basic and acidic residues. The segment at 133–147 (LAEENERLKQEIERL) is leucine-zipper.

Belongs to the bZIP family. As to quaternary structure, heterodimer. Interacts with TCF7L2/TCF4, EP300/P300, HDAC1, HDAC5 and HDAC6. Interacts with TRIB3 which blocks its association with EP300/P300. Interacts with FOXO3, CEBPB and ATF4. Post-translationally, ubiquitinated, leading to its degradation by the proteasome. In terms of processing, phosphorylation at serine residues by MAPK14 enhances its transcriptional activation activity while phosphorylation at serine residues by CK2 inhibits its transcriptional activation activity.

The protein resides in the cytoplasm. It localises to the nucleus. Multifunctional transcription factor in ER stress response. Plays an essential role in the response to a wide variety of cell stresses and induces cell cycle arrest and apoptosis in response to ER stress. Plays a dual role both as an inhibitor of CCAAT/enhancer-binding protein (C/EBP) function and as an activator of other genes. Acts as a dominant-negative regulator of C/EBP-induced transcription: dimerizes with members of the C/EBP family, impairs their association with C/EBP binding sites in the promoter regions, and inhibits the expression of C/EBP regulated genes. Positively regulates the transcription of TRIB3, IL6, IL8, IL23, TNFRSF10B/DR5, PPP1R15A/GADD34, BBC3/PUMA, BCL2L11/BIM and ERO1L. Negatively regulates; expression of BCL2 and MYOD1, ATF4-dependent transcriptional activation of asparagine synthetase (ASNS), CEBPA-dependent transcriptional activation of hepcidin (HAMP) and CEBPB-mediated expression of peroxisome proliferator-activated receptor gamma (PPARG). Inhibits the canonical Wnt signaling pathway by binding to TCF7L2/TCF4, impairing its DNA-binding properties and repressing its transcriptional activity. Plays a regulatory role in the inflammatory response through the induction of caspase-11 (CASP4/CASP11) which induces the activation of caspase-1 (CASP1) and both these caspases increase the activation of pro-IL1B to mature IL1B which is involved in the inflammatory response. This chain is DNA damage-inducible transcript 3 protein (DDIT3), found in Bos taurus (Bovine).